The following is a 493-amino-acid chain: Glutamyl-tRNA(Gln) amidotransferase subunit A (493 aa).

Catalysis depends on charge relay system residues K78 and S158. S182 acts as the Acyl-ester intermediate in catalysis.

Belongs to the amidase family. GatA subfamily. In terms of assembly, heterotrimer of A, B and C subunits.

The catalysed reaction is L-glutamyl-tRNA(Gln) + L-glutamine + ATP + H2O = L-glutaminyl-tRNA(Gln) + L-glutamate + ADP + phosphate + H(+). Its function is as follows. Allows the formation of correctly charged Gln-tRNA(Gln) through the transamidation of misacylated Glu-tRNA(Gln) in organisms which lack glutaminyl-tRNA synthetase. The reaction takes place in the presence of glutamine and ATP through an activated gamma-phospho-Glu-tRNA(Gln). The chain is Glutamyl-tRNA(Gln) amidotransferase subunit A from Rickettsia felis (strain ATCC VR-1525 / URRWXCal2) (Rickettsia azadi).